Here is a 116-residue protein sequence, read N- to C-terminus: Large ribosomal subunit protein bL17 (116 aa).

Belongs to the bacterial ribosomal protein bL17 family. In terms of assembly, part of the 50S ribosomal subunit. Contacts protein L32.

The polypeptide is Large ribosomal subunit protein bL17 (Synechococcus sp. (strain JA-3-3Ab) (Cyanobacteria bacterium Yellowstone A-Prime)).